A 131-amino-acid chain; its full sequence is SPbeta prophage-derived uncharacterized protein YosD (131 aa).

Residues 102 to 131 (EHNNKKAKNNDTQNQRQIKTSWWQRLTKKD) form a disordered region. Over residues 111–125 (NDTQNQRQIKTSWWQ) the composition is skewed to polar residues.

This is SPbeta prophage-derived uncharacterized protein YosD (yosD) from Bacillus subtilis (strain 168).